Here is a 390-residue protein sequence, read N- to C-terminus: Probable purine permease 7 (390 aa).

A run of 10 helical transmembrane segments spans residues 42–62 (WLRV…ATIL), 74–94 (TYVV…FRFF), 110–130 (SPSF…VSAY), 131–151 (AYLS…LILA), 169–189 (FTPL…LLVV), 205–225 (VIGF…LSLI), 244–264 (LAIY…FASG), 286–306 (TLAS…GLIF), 312–332 (FSNS…VIVF), and 341–361 (IFSI…HYLD).

It belongs to the purine permeases (TC 2.A.7.14) family.

It localises to the membrane. This is Probable purine permease 7 (PUP7) from Arabidopsis thaliana (Mouse-ear cress).